Reading from the N-terminus, the 221-residue chain is Small ribosomal subunit protein uS2 (221 aa).

Positions 202–221 are disordered; it reads KVKMPQQNQRGRPQRRFQRR.

It belongs to the universal ribosomal protein uS2 family.

This Methanococcus vannielii (strain ATCC 35089 / DSM 1224 / JCM 13029 / OCM 148 / SB) protein is Small ribosomal subunit protein uS2.